Consider the following 891-residue polypeptide: Tubulin polyglutamylase TTLL6 (891 aa).

2 disordered regions span residues 1–25 (MGAL…SSPA) and 44–106 (SQAR…KRKK). Over residues 63 to 76 (SEEKGDSSKEDPKE) the composition is skewed to basic and acidic residues. Positions 88–99 (GAQNGLQNAQQQ) are enriched in low complexity. The TTL domain occupies 106–449 (KKRLVINLSS…ESCDKKKVLE (344 aa)). Residues lysine 223, 229–230 (QG), 251–254 (QLYI), and 264–266 (KFD) contribute to the ATP site. An a protein-binding site is contributed by glutamine 229. An L-glutamate-binding site is contributed by arginine 290. Residue 312-313 (TN) participates in ATP binding. L-glutamate is bound by residues tyrosine 314, serine 315, and lysine 332. Residues aspartate 395, glutamate 408, and asparagine 410 each contribute to the Mg(2+) site. An a protein-binding site is contributed by histidine 411. The interval 420–499 (RLDKEVKDGL…CGGFRLIYPS (80 aa)) is c-MTBD region. Lysine 426 provides a ligand contact to L-glutamate. Disordered regions lie at residues 546-584 (QMKK…ATQA), 607-636 (GERK…LTSA), 687-711 (TTPE…TASS), and 800-820 (NNLS…DSSG). Over residues 687 to 699 (TTPESTTQLSISP) the composition is skewed to polar residues.

The protein belongs to the tubulin--tyrosine ligase family. Found in a complex with CEP41. Mg(2+) is required as a cofactor.

Its subcellular location is the cytoplasm. The protein localises to the cytoskeleton. It is found in the cilium axoneme. The protein resides in the cilium basal body. It carries out the reaction L-glutamyl-[protein] + L-glutamate + ATP = gamma-L-glutamyl-L-glutamyl-[protein] + ADP + phosphate + H(+). The catalysed reaction is (L-glutamyl)(n)-gamma-L-glutamyl-L-glutamyl-[protein] + L-glutamate + ATP = (L-glutamyl)(n+1)-gamma-L-glutamyl-L-glutamyl-[protein] + ADP + phosphate + H(+). Polyglutamylase which modifies both tubulin and non-tubulin proteins, generating alpha-linked polyglutamate side chains on the gamma-carboxyl group of specific glutamate residues of target proteins. Preferentially mediates ATP-dependent long polyglutamate chain elongation over the initiation step of the polyglutamylation reaction. Preferentially modifies the alpha-tubulin tail over a beta-tail. Promotes tubulin polyglutamylation which stimulates spastin/SPAST-mediated microtubule severing, thereby regulating microtubule functions. Mediates microtubule polyglutamylation in primary cilia axoneme, which is important for ciliary structural formation and motility. Mediates microtubule polyglutamylation in motile cilia, necessary for the regulation of ciliary coordinated beating. Polyglutamylates non-tubulin protein nucleotidyltransferase CGAS, leading to CGAS DNA-binding inhibition, thereby preventing antiviral defense response. This chain is Tubulin polyglutamylase TTLL6, found in Homo sapiens (Human).